The chain runs to 380 residues: Cytochrome b (380 aa).

The next 4 membrane-spanning stretches (helical) occupy residues F34–M54, W78–I99, W114–L134, and F179–T199. Heme b is bound by residues H84 and H98. Heme b contacts are provided by H183 and H197. An a ubiquinone-binding site is contributed by H202. The next 4 helical transmembrane spans lie at S227–S247, L289–H309, L321–S341, and F348–P368.

The protein belongs to the cytochrome b family. In terms of assembly, the cytochrome bc1 complex contains 11 subunits: 3 respiratory subunits (MT-CYB, CYC1 and UQCRFS1), 2 core proteins (UQCRC1 and UQCRC2) and 6 low-molecular weight proteins (UQCRH/QCR6, UQCRB/QCR7, UQCRQ/QCR8, UQCR10/QCR9, UQCR11/QCR10 and a cleavage product of UQCRFS1). This cytochrome bc1 complex then forms a dimer. Heme b serves as cofactor.

The protein resides in the mitochondrion inner membrane. Component of the ubiquinol-cytochrome c reductase complex (complex III or cytochrome b-c1 complex) that is part of the mitochondrial respiratory chain. The b-c1 complex mediates electron transfer from ubiquinol to cytochrome c. Contributes to the generation of a proton gradient across the mitochondrial membrane that is then used for ATP synthesis. This Caracara plancus (Southern caracara) protein is Cytochrome b (MT-CYB).